Consider the following 148-residue polypeptide: Probable 4-amino-4-deoxy-L-arabinose-phosphoundecaprenol flippase subunit ArnF (148 aa).

At 1 to 23 the chain is on the cytoplasmic side; it reads MRGDNTGVGKEPAVTERPAIKGY. The helical transmembrane segment at 24-44 threads the bilayer; it reads LYVLGSILLVTLAQLAMKWGV. At 45-63 the chain is on the periplasmic side; sequence MQLPAWQASLDIMLAHPVP. Residues 64-84 form a helical membrane-spanning segment; that stretch reads LLVITAGVGCYALSLLCWLAA. At 85–91 the chain is on the cytoplasmic side; sequence LHFTPLN. Residues 92–112 form a helical membrane-spanning segment; the sequence is IAYPLLSTSYALVYLLAVSIP. At 113 to 117 the chain is on the periplasmic side; the sequence is SFAEP. The chain crosses the membrane as a helical span at residues 118–138; sequence LEPGKAVGVIFILLGAVLVGI. The Cytoplasmic portion of the chain corresponds to 139–148; it reads KPVGRKRNAH.

Belongs to the ArnF family. In terms of assembly, heterodimer of ArnE and ArnF.

The protein resides in the cell inner membrane. It participates in bacterial outer membrane biogenesis; lipopolysaccharide biosynthesis. In terms of biological role, translocates 4-amino-4-deoxy-L-arabinose-phosphoundecaprenol (alpha-L-Ara4N-phosphoundecaprenol) from the cytoplasmic to the periplasmic side of the inner membrane. This Aeromonas salmonicida (strain A449) protein is Probable 4-amino-4-deoxy-L-arabinose-phosphoundecaprenol flippase subunit ArnF.